The chain runs to 414 residues: MKKLIAFQILIALAVGAVIGHFFPDFGMALRPVGDGFIRLIKMIVVPIVFSTIVIGAAGSGSMKKMGSLGIKTIIWFEVITTLVLGLGLLLANVLKPGVGLDLSHLAKKDIHELSGYTDKVVDFKQMILDIIPTNIIDVMARNDLLAVIFFAILFGVAAAGIGKASEPVMKFFESTAQIMFKLTQIVMVTAPIGVLALMAASVGQYGIELLLPMFKLVGTVFLGLFLILFVLFPLVGLIFQIKYFEVLKMIWDLFLIAFSTTSTETILPQLMDRMEKYGCPKRVVSFVVPSGLSLNCDGSSLYLSVSCIFLAQAFQVDMTLSQQLLMMLVLVMTSKGIAAVPSGSLVVLLATANAVGLPAEGVAIIAGVDRVMDMARTGVNVPGHAIACIVVSKWEKAFRQKEWVSANSQTESI.

Topologically, residues 1–3 (MKK) are cytoplasmic. Residues 4 to 24 (LIAFQILIALAVGAVIGHFFP) traverse the membrane as a helical segment. The Extracellular segment spans residues 25–42 (DFGMALRPVGDGFIRLIK). Residues 43-63 (MIVVPIVFSTIVIGAAGSGSM) form a helical membrane-spanning segment. Residues 64 to 73 (KKMGSLGIKT) are Cytoplasmic-facing. A helical membrane pass occupies residues 74–94 (IIWFEVITTLVLGLGLLLANV). Residues 95–144 (LKPGVGLDLSHLAKKDIHELSGYTDKVVDFKQMILDIIPTNIIDVMARND) lie on the Extracellular side of the membrane. A helical transmembrane segment spans residues 145 to 165 (LLAVIFFAILFGVAAAGIGKA). At 166 to 182 (SEPVMKFFESTAQIMFK) the chain is on the cytoplasmic side. Residues 183–203 (LTQIVMVTAPIGVLALMAASV) traverse the membrane as a helical segment. Residues 204 to 219 (GQYGIELLLPMFKLVG) lie on the Extracellular side of the membrane. A helical membrane pass occupies residues 220-240 (TVFLGLFLILFVLFPLVGLIF). Residue Gln-241 is a topological domain, cytoplasmic. A helical membrane pass occupies residues 242-262 (IKYFEVLKMIWDLFLIAFSTT). Residues 263–300 (STETILPQLMDRMEKYGCPKRVVSFVVPSGLSLNCDGS) lie on the Extracellular side of the membrane. Residues 301–321 (SLYLSVSCIFLAQAFQVDMTL) form a helical membrane-spanning segment. Over 322-324 (SQQ) the chain is Cytoplasmic. The next 2 helical transmembrane spans lie at 325-345 (LLMM…PSGS) and 346-366 (LVVL…VAII). Residues 367 to 414 (AGVDRVMDMARTGVNVPGHAIACIVVSKWEKAFRQKEWVSANSQTESI) lie on the Cytoplasmic side of the membrane.

The protein belongs to the dicarboxylate/amino acid:cation symporter (DAACS) (TC 2.A.23) family.

The protein resides in the cell membrane. With respect to regulation, glutamate uptake is inhibited by beta-hydroxyaspartate and cysteic acid. Its function is as follows. Catalyzes the proton-dependent, binding-protein-independent transport of glutamate and aspartate. The chain is Proton/glutamate-aspartate symporter from Bacillus subtilis (strain 168).